A 319-amino-acid polypeptide reads, in one-letter code: Aspartate carbamoyltransferase catalytic subunit (319 aa).

Carbamoyl phosphate-binding residues include R64 and T65. Residue K92 participates in L-aspartate binding. The carbamoyl phosphate site is built by R114, H142, and Q145. L-aspartate contacts are provided by R175 and R229. Residues G270 and P271 each contribute to the carbamoyl phosphate site.

The protein belongs to the aspartate/ornithine carbamoyltransferase superfamily. ATCase family. Heterododecamer (2C3:3R2) of six catalytic PyrB chains organized as two trimers (C3), and six regulatory PyrI chains organized as three dimers (R2).

The catalysed reaction is carbamoyl phosphate + L-aspartate = N-carbamoyl-L-aspartate + phosphate + H(+). The protein operates within pyrimidine metabolism; UMP biosynthesis via de novo pathway; (S)-dihydroorotate from bicarbonate: step 2/3. Functionally, catalyzes the condensation of carbamoyl phosphate and aspartate to form carbamoyl aspartate and inorganic phosphate, the committed step in the de novo pyrimidine nucleotide biosynthesis pathway. In Rhodospirillum rubrum (strain ATCC 11170 / ATH 1.1.1 / DSM 467 / LMG 4362 / NCIMB 8255 / S1), this protein is Aspartate carbamoyltransferase catalytic subunit.